A 197-amino-acid polypeptide reads, in one-letter code: Dephospho-CoA kinase (197 aa).

One can recognise a DPCK domain in the interval 4–197 (LIGLTGGIAT…VLKWLKTITK (194 aa)). 12-17 (ATGKST) contributes to the ATP binding site.

It belongs to the CoaE family.

It localises to the cytoplasm. The catalysed reaction is 3'-dephospho-CoA + ATP = ADP + CoA + H(+). The protein operates within cofactor biosynthesis; coenzyme A biosynthesis; CoA from (R)-pantothenate: step 5/5. Its function is as follows. Catalyzes the phosphorylation of the 3'-hydroxyl group of dephosphocoenzyme A to form coenzyme A. The chain is Dephospho-CoA kinase from Lactiplantibacillus plantarum (strain ATCC BAA-793 / NCIMB 8826 / WCFS1) (Lactobacillus plantarum).